Here is a 436-residue protein sequence, read N- to C-terminus: Chorion-specific transcription factor GCMa (436 aa).

The segment at residues 14 to 169 is a DNA-binding region (GCM); the sequence is LSWDINDMKL…KLEAEARRAM (156 aa). Zn(2+) contacts are provided by cysteine 76, cysteine 82, cysteine 86, cysteine 113, cysteine 116, cysteine 125, histidine 152, and histidine 154.

Polyubiquitinated in the presence of UBE2D2 and FBXW2 (in vitro).

It localises to the nucleus. In terms of biological role, transcription factor involved in the control of expression of placental growth factor (PGF) and other placenta-specific genes. Binds to the trophoblast-specific element 2 (TSE2) of the aromatase gene enhancer. Binds to the SYDE1 promoter. Has a central role in mediating the differentiation of trophoblast cells along both the villous and extravillous pathways in placental development. The polypeptide is Chorion-specific transcription factor GCMa (Gcm1) (Rattus norvegicus (Rat)).